We begin with the raw amino-acid sequence, 218 residues long: Ribose-5-phosphate isomerase A (218 aa).

Substrate is bound by residues S28–T31, D81–D84, and K94–G97. E103 functions as the Proton acceptor in the catalytic mechanism. K121 is a binding site for substrate.

The protein belongs to the ribose 5-phosphate isomerase family. As to quaternary structure, homodimer.

The catalysed reaction is aldehydo-D-ribose 5-phosphate = D-ribulose 5-phosphate. Its pathway is carbohydrate degradation; pentose phosphate pathway; D-ribose 5-phosphate from D-ribulose 5-phosphate (non-oxidative stage): step 1/1. Its function is as follows. Catalyzes the reversible conversion of ribose-5-phosphate to ribulose 5-phosphate. The polypeptide is Ribose-5-phosphate isomerase A (Wigglesworthia glossinidia brevipalpis).